The following is a 596-amino-acid chain: uncharacterized protein (596 aa).

Residues lysine 44 to aspartate 203 enclose the Helicase ATP-binding domain. The Helicase C-terminal domain maps to arginine 285–leucine 432. Disordered stretches follow at residues leucine 420–glutamine 444 and glutamate 506–glycine 533. The segment covering lysine 510 to arginine 523 has biased composition (polar residues).

It to M.tuberculosis Rv2917.

This is an uncharacterized protein from Mycobacterium leprae (strain TN).